A 325-amino-acid chain; its full sequence is Tetraacyldisaccharide 4'-kinase (325 aa).

Residue 58–65 (TVGGSGKT) coordinates ATP.

The protein belongs to the LpxK family.

It catalyses the reaction a lipid A disaccharide + ATP = a lipid IVA + ADP + H(+). Its pathway is glycolipid biosynthesis; lipid IV(A) biosynthesis; lipid IV(A) from (3R)-3-hydroxytetradecanoyl-[acyl-carrier-protein] and UDP-N-acetyl-alpha-D-glucosamine: step 6/6. In terms of biological role, transfers the gamma-phosphate of ATP to the 4'-position of a tetraacyldisaccharide 1-phosphate intermediate (termed DS-1-P) to form tetraacyldisaccharide 1,4'-bis-phosphate (lipid IVA). The sequence is that of Tetraacyldisaccharide 4'-kinase from Coxiella burnetii (strain Dugway 5J108-111).